A 433-amino-acid polypeptide reads, in one-letter code: Enolase (433 aa).

Gln167 serves as a coordination point for (2R)-2-phosphoglycerate. The active-site Proton donor is Glu209. Mg(2+)-binding residues include Asp246, Glu291, and Asp318. (2R)-2-phosphoglycerate is bound by residues Lys343, Arg372, Ser373, and Lys394. Lys343 functions as the Proton acceptor in the catalytic mechanism.

The protein belongs to the enolase family. Component of the RNA degradosome, a multiprotein complex involved in RNA processing and mRNA degradation. Mg(2+) serves as cofactor.

Its subcellular location is the cytoplasm. It localises to the secreted. The protein resides in the cell surface. It carries out the reaction (2R)-2-phosphoglycerate = phosphoenolpyruvate + H2O. The protein operates within carbohydrate degradation; glycolysis; pyruvate from D-glyceraldehyde 3-phosphate: step 4/5. Functionally, catalyzes the reversible conversion of 2-phosphoglycerate (2-PG) into phosphoenolpyruvate (PEP). It is essential for the degradation of carbohydrates via glycolysis. The sequence is that of Enolase from Aeromonas hydrophila subsp. hydrophila (strain ATCC 7966 / DSM 30187 / BCRC 13018 / CCUG 14551 / JCM 1027 / KCTC 2358 / NCIMB 9240 / NCTC 8049).